A 345-amino-acid chain; its full sequence is Ubiquitin-associated domain-containing protein 2 (345 aa).

The first 35 residues, Met1 to Pro35, serve as a signal peptide directing secretion. Topologically, residues His36–Lys91 are extracellular. Residues Phe92 to Glu112 form a helical membrane-spanning segment. At Ala113 to Asn125 the chain is on the cytoplasmic side. The chain crosses the membrane as a helical span at residues Leu126–Pro146. Residues Arg147 to Thr163 lie on the Extracellular side of the membrane. Asn161 carries an N-linked (GlcNAc...) asparagine glycan. A helical membrane pass occupies residues Leu164–Ile184. Residues Ser185–His345 lie on the Cytoplasmic side of the membrane. Residues Glu305–His345 form the UBA domain.

As to quaternary structure, interacts with LMBR1L, FAF2, AMFR and VCP.

The protein localises to the endoplasmic reticulum membrane. Its function is as follows. Restricts trafficking of FAF2 from the endoplasmic reticulum to lipid droplets. In association with LMBR1L and E3 ubiquitin-protein ligase AMFR, negatively regulates the canonical Wnt signaling pathway in the lymphocytes by promoting the ubiquitin-mediated degradation of CTNNB1 and Wnt receptors FZD6 and LRP6. The protein is Ubiquitin-associated domain-containing protein 2 (UBAC2) of Macaca fascicularis (Crab-eating macaque).